The sequence spans 212 residues: MRVVVIDYNGGNLASAAQAARKAATRKGIEADVVISRDATDILNADRLILPGQGAFADCAQGLGPALRNMLETATANGTPFLGICVGMQLMCEYGLEHGRTEGLGWISGNIRRMDEAANASLRLPHMGWNTLDFTPGAHLLTDGLIPGNHGYFVHSYALHDGADSDLVATAQYGTQVPAIVARGNRCGTQFHVEKSQDVGLTILGNFLRWTS.

The 211-residue stretch at Arg2–Ser212 folds into the Glutamine amidotransferase type-1 domain. Catalysis depends on Cys85, which acts as the Nucleophile. Active-site residues include His192 and Glu194.

As to quaternary structure, heterodimer of HisH and HisF.

It is found in the cytoplasm. It carries out the reaction 5-[(5-phospho-1-deoxy-D-ribulos-1-ylimino)methylamino]-1-(5-phospho-beta-D-ribosyl)imidazole-4-carboxamide + L-glutamine = D-erythro-1-(imidazol-4-yl)glycerol 3-phosphate + 5-amino-1-(5-phospho-beta-D-ribosyl)imidazole-4-carboxamide + L-glutamate + H(+). It catalyses the reaction L-glutamine + H2O = L-glutamate + NH4(+). It participates in amino-acid biosynthesis; L-histidine biosynthesis; L-histidine from 5-phospho-alpha-D-ribose 1-diphosphate: step 5/9. In terms of biological role, IGPS catalyzes the conversion of PRFAR and glutamine to IGP, AICAR and glutamate. The HisH subunit catalyzes the hydrolysis of glutamine to glutamate and ammonia as part of the synthesis of IGP and AICAR. The resulting ammonia molecule is channeled to the active site of HisF. The sequence is that of Imidazole glycerol phosphate synthase subunit HisH from Gluconobacter oxydans (strain 621H) (Gluconobacter suboxydans).